Consider the following 64-residue polypeptide: Large ribosomal subunit protein bL28 (64 aa).

The interval 1–23 is disordered; sequence MSKECYFTGRKTVSSNNRSHAMN. Positions 11–23 are enriched in polar residues; the sequence is KTVSSNNRSHAMN.

The protein belongs to the bacterial ribosomal protein bL28 family.

The chain is Large ribosomal subunit protein bL28 from Lactococcus lactis subsp. cremoris (strain SK11).